The following is a 256-amino-acid chain: Major prion protein (256 aa).

An N-terminal signal peptide occupies residues 1–24 (MVKSHIGSWILVLFVAMWSDVGLC). The segment at 25 to 233 (KKRPKPGGGW…ESEAYYQRGA (209 aa)) is interaction with GRB2, ERI3 and SYN1. Residues 28-110 (PKPGGGWNTG…QWNKPSKPKT (83 aa)) are disordered. A run of 5 repeats spans residues 54–62 (PQGGGGWGQ), 63–70 (PHGGGWGQ), 71–78 (PHGGGWGQ), 79–86 (PHGGGWGQ), and 87–95 (PHGGGGWGQ). Residues 54 to 95 (PQGGGGWGQPHGGGWGQPHGGGWGQPHGGGWGQPHGGGGWGQ) form a 5 X 8 AA tandem repeats of P-H-G-G-G-W-G-Q region. Residues 55–97 (QGGGGWGQPHGGGWGQPHGGGWGQPHGGGWGQPHGGGGWGQGG) are compositionally biased toward gly residues. H64, G65, G66, H72, G73, G74, H80, G81, G82, H88, G90, and G91 together coordinate Cu(2+). C182 and C217 are disulfide-bonded. N-linked (GlcNAc...) asparagine glycosylation is found at N184 and N200. The GPI-anchor amidated alanine moiety is linked to residue A233. A propeptide spans 234 to 256 (SVILFSSPPVILLISFLIFLIVG) (removed in mature form).

This sequence belongs to the prion family. In terms of assembly, monomer and homodimer. Has a tendency to aggregate into amyloid fibrils containing a cross-beta spine, formed by a steric zipper of superposed beta-strands. Soluble oligomers may represent an intermediate stage on the path to fibril formation. Copper binding may promote oligomerization. Interacts with GRB2, APP, ERI3/PRNPIP and SYN1. Mislocalized cytosolically exposed PrP interacts with MGRN1; this interaction alters MGRN1 subcellular location and causes lysosomal enlargement. Interacts with KIAA1191.

It is found in the cell membrane. The protein resides in the golgi apparatus. Functionally, its primary physiological function is unclear. Has cytoprotective activity against internal or environmental stresses. May play a role in neuronal development and synaptic plasticity. May be required for neuronal myelin sheath maintenance. May play a role in iron uptake and iron homeostasis. Soluble oligomers are toxic to cultured neuroblastoma cells and induce apoptosis (in vitro). Association with GPC1 (via its heparan sulfate chains) targets PRNP to lipid rafts. Also provides Cu(2+) or Zn(2+) for the ascorbate-mediated GPC1 deaminase degradation of its heparan sulfate side chains. This is Major prion protein (PRNP) from Cervus elaphus (Red deer).